The chain runs to 412 residues: Isovaleryl-CoA dehydrogenase, mitochondrial (412 aa).

Residues 1–25 (MHKLFVARSVKSALFRIKNHQKPQF) constitute a mitochondrion transit peptide. Residues 154–163 (LAMSEPNAGS) and 187–189 (WCT) each bind FAD. Ser163 contacts substrate. Substrate-binding positions include 209–210 (SK), Tyr264, and 271–274 (DLER). Glu273 (proton acceptor) is an active-site residue. Residues Arg299, Gln310, and 367–371 (QCLGG) each bind FAD. Position 394-395 (394-395 (AG)) interacts with substrate. 396–398 (TSE) contributes to the FAD binding site.

This sequence belongs to the acyl-CoA dehydrogenase family. As to quaternary structure, homotetramer. Requires FAD as cofactor. In terms of tissue distribution, expressed in flowers and tubers.

The protein resides in the mitochondrion. The catalysed reaction is 3-methylbutanoyl-CoA + oxidized [electron-transfer flavoprotein] + H(+) = 3-methylbut-2-enoyl-CoA + reduced [electron-transfer flavoprotein]. It functions in the pathway amino-acid degradation; L-leucine degradation; (S)-3-hydroxy-3-methylglutaryl-CoA from 3-isovaleryl-CoA: step 1/3. In terms of biological role, involved in the catabolism of amino acids. Uses isovaleryl-CoA as substrate. Minor activity detected with 2-methylpalmitoyl-CoA or 2-methylbutanoyl-CoA, but no activity with short- and medium-straight chain acyl-CoA esters or with 2-methylhexanoyl-CoA. In Solanum tuberosum (Potato), this protein is Isovaleryl-CoA dehydrogenase, mitochondrial (IVD).